The sequence spans 174 residues: Translation initiation factor IF-3 (174 aa).

Belongs to the IF-3 family. Monomer.

The protein resides in the cytoplasm. In terms of biological role, IF-3 binds to the 30S ribosomal subunit and shifts the equilibrium between 70S ribosomes and their 50S and 30S subunits in favor of the free subunits, thus enhancing the availability of 30S subunits on which protein synthesis initiation begins. The sequence is that of Translation initiation factor IF-3 from Helicobacter hepaticus (strain ATCC 51449 / 3B1).